We begin with the raw amino-acid sequence, 135 residues long: uncharacterized protein (135 aa).

Residues 13–129 (QVLIAENSRF…KILEKVNAAI (117 aa)) enclose the Response regulatory domain. D64 carries the 4-aspartylphosphate modification.

This is an uncharacterized protein from Leptospira interrogans serogroup Icterohaemorrhagiae serovar copenhageni (strain Fiocruz L1-130).